The following is a 224-amino-acid chain: N-(5'-phosphoribosyl)anthranilate isomerase (224 aa).

The protein belongs to the TrpF family.

It catalyses the reaction N-(5-phospho-beta-D-ribosyl)anthranilate = 1-(2-carboxyphenylamino)-1-deoxy-D-ribulose 5-phosphate. It participates in amino-acid biosynthesis; L-tryptophan biosynthesis; L-tryptophan from chorismate: step 3/5. The sequence is that of N-(5'-phosphoribosyl)anthranilate isomerase from Sinorhizobium fredii (strain NBRC 101917 / NGR234).